Here is a 703-residue protein sequence, read N- to C-terminus: Protein CNGC15c (703 aa).

Residues 1 to 10 (MGFDNPRSER) are compositionally biased toward basic and acidic residues. The tract at residues 1-23 (MGFDNPRSERFEDDPEISKIPTT) is disordered. 5 consecutive transmembrane segments (helical) span residues 91–111 (IFLVACLVSLFVDPLFFYLPV), 179–199 (GFWLDFIAALPLPQVLIWIII), 216–236 (FFIIFQYIPRLYLIFPLSSQI), 255–275 (LMLYMLASHILGACWYLLSIE), and 372–392 (FIGEIMVAIVVATLGLVLFAL). 480-565 (LFDQMDERML…WALDPRPSVI (86 aa)) contributes to the a nucleoside 3',5'-cyclic phosphate binding site. In terms of domain architecture, IQ spans 616 to 644 (RTWAACFIQAAWRRHKKRKEAAELRAKEN). The segment at 676-703 (KGVNMHSGTNSGVVSSLQKPTEPDFSDE) is disordered. Residues 681-694 (HSGTNSGVVSSLQK) show a composition bias toward polar residues.

It belongs to the cyclic nucleotide-gated cation channel (TC 1.A.1.5) family. Interacts (via N-terminus) with DMI1 (via c-terminus). The Nod factor has no effect on this interaction, implying that the complex is maintained after activation. As to expression, expressed in roots, stems, leaves, flowers and pods.

It is found in the nucleus membrane. In terms of biological role, cyclic nucleotide-gated channel involved in the establishment of both rhizobial and mycorrhizal associations. Required for full activation of nuclear-localized Ca(2+) oscillations by Nod and Myc factors. Simultaneous activation of the K(+)-permeable channel DMI1 and the Ca(2+) channel CNGC15 can give rise to sustained Ca(2+) oscillations. May function during fertilization in both female and male gametophytic Ca(2+) signaling. The chain is Protein CNGC15c from Medicago truncatula (Barrel medic).